The sequence spans 363 residues: Putative glutamate--cysteine ligase 2 (363 aa).

The protein belongs to the glutamate--cysteine ligase type 2 family. YbdK subfamily.

It catalyses the reaction L-cysteine + L-glutamate + ATP = gamma-L-glutamyl-L-cysteine + ADP + phosphate + H(+). Its function is as follows. ATP-dependent carboxylate-amine ligase which exhibits weak glutamate--cysteine ligase activity. This chain is Putative glutamate--cysteine ligase 2, found in Streptomyces coelicolor (strain ATCC BAA-471 / A3(2) / M145).